A 711-amino-acid chain; its full sequence is MASEAPSPPSPSPPPPASPEPELAQLRRKVEKLERELRSCRRQVREVEKLLQHTERLYRNAESDNQELRTQVEELSKILHCGKNEDNPKSDVEVQTESQAPWAISDYYYQTCYNDDSLPSKETELCVQQSQCAQASALDPQDESHIDSGSYAGADATEGVSHRQEDAVTSDSQESVSALAEGPALEGSSLAESLRAAAEAAVSQTGFTYDESTGLYFDHSTGFYYDSENQLYYDPSTGIYYYCDVESGRYQFHSRVDLQPYQTSSTKPNRERRLKKRRKEPGFYTANEEKDLSSEDQKVCSVEYINCSEDEHSGNVKKKARTDTSHKSSPLQLTVAVSGDTVESPGDDNSASSKDERIGESESEPEEGEITDSQSEKSYDGDSSSGDRETSEESDDEDEERIWPPCIRVIVIRSPVLQMGSLFIITAVSPATIGREKDMEHTVRIPEVAVSKFHAEVYFDHDLQSYVLVDQGSQNGTIVNGKQILQPKTKCDPYVLEHGDEVKIGETVLSFHIHPGSETCDGCEPGQVRAHLRLDRKDEPLVGPALSKEEKELERRKALKKIRVKYGLQNTDYEAEKALKNPKYKDRAGKRREQVGSEGTFQRDDAPASVHSEITDSNKGRKMLEKMGWKRGEGLGKDGGGMKTPIQLQLRRTHAGLGTGKLSSIDDVHLIQNKSKKHWDKARERFAETFTENKPRKETPGAVPWVTGTAE.

Pro residues predominate over residues 1–19 (MASEAPSPPSPSPPPPASP). Disordered stretches follow at residues 1–23 (MASE…EPEL), 137–184 (ALDP…EGPA), 260–297 (PYQT…SEDQ), and 311–400 (EHSG…EDEE). Position 2 is an N-acetylalanine (alanine 2). Residues serine 7 and serine 12 each carry the phosphoserine modification. Positions 19–85 (PEPELAQLRR…SKILHCGKNE (67 aa)) form a coiled coil. Positions 167 to 176 (AVTSDSQESV) are enriched in polar residues. A compositionally biased stretch (basic residues) spans 270–279 (RERRLKKRRK). Over residues 287-297 (NEEKDLSSEDQ) the composition is skewed to basic and acidic residues. Phosphoserine is present on serine 344. Positions 361 to 370 (SESEPEEGEI) are enriched in acidic residues. Residues 374-391 (QSEKSYDGDSSSGDRETS) show a composition bias toward basic and acidic residues. Residues 431 to 484 (ATIGREKDMEHTVRIPEVAVSKFHAEVYFDHDLQSYVLVDQGSQNGTIVNGKQI) form the FHA domain. Composition is skewed to basic and acidic residues over residues 579-606 (LKNP…RDDA) and 613-623 (EITDSNKGRKM). Residues 579 to 623 (LKNPKYKDRAGKRREQVGSEGTFQRDDAPASVHSEITDSNKGRKM) are disordered. One can recognise a G-patch domain in the interval 616 to 662 (DSNKGRKMLEKMGWKRGEGLGKDGGGMKTPIQLQLRRTHAGLGTGKL). Position 661 is an N6-acetyllysine (lysine 661). Residues 690-699 (FTENKPRKET) are compositionally biased toward basic and acidic residues. The disordered stretch occupies residues 690–711 (FTENKPRKETPGAVPWVTGTAE).

Interacts with the secreted angiogenic factor TNFSF12.

The protein localises to the cytoplasm. Its subcellular location is the secreted. Promotes angiogenesis and the proliferation of endothelial cells. Able to bind to endothelial cells and promote cell proliferation, suggesting that it may act in an autocrine fashion. The polypeptide is Angiogenic factor with G patch and FHA domains 1 (Aggf1) (Mus musculus (Mouse)).